A 541-amino-acid chain; its full sequence is Putative apolipoprotein N-acyltransferase (541 aa).

The next 6 helical transmembrane spans lie at 31 to 51 (PLPA…AAHA), 65 to 85 (GWLF…VSMH), 89 to 109 (GLAA…LALF), 144 to 164 (AACW…FPWL), 181 to 201 (LLGV…LAGL), and 215 to 235 (LAAG…QFSW). The CN hydrolase domain maps to 248–511 (VQGNVEQSQK…AGVLPVAVQG (264 aa)). Glutamate 292 (proton acceptor) is an active-site residue. The active site involves lysine 366. The active-site Nucleophile is cysteine 416.

It belongs to the CN hydrolase family. Apolipoprotein N-acyltransferase subfamily.

Its subcellular location is the cell inner membrane. It catalyses the reaction N-terminal S-1,2-diacyl-sn-glyceryl-L-cysteinyl-[lipoprotein] + a glycerophospholipid = N-acyl-S-1,2-diacyl-sn-glyceryl-L-cysteinyl-[lipoprotein] + a 2-acyl-sn-glycero-3-phospholipid + H(+). The protein operates within protein modification; lipoprotein biosynthesis (N-acyl transfer). Its function is as follows. Catalyzes the phospholipid dependent N-acylation of the N-terminal cysteine of apolipoprotein, the last step in lipoprotein maturation. The chain is Putative apolipoprotein N-acyltransferase from Bordetella parapertussis (strain 12822 / ATCC BAA-587 / NCTC 13253).